Reading from the N-terminus, the 282-residue chain is AVPPSYADLGKSARDIFNKGYGFGLVKLDVKTKSATGVEFTTSGTSNTDSGKVNGSLETKYKWGEYGLTFTEKWNTDNTLGTEIAIEDQIAKGLKLTFDTTFSPNTGKKSGKVKAAYKQEYVNLGCDVDFDFAGPAIHGSAVVGYEGWLAGYQMTFDSAKSKLTKNNFAVGYKTGDFQLHTNVNDGSEFAGSIYQKVSDKMETAVNLAWTSGNNSTRFGIAAKYQLDSHAAISAKVNNSSLVGVGYTQTLRPGVKLTLSALVDGKNINAGGHKLGLGLELEA.

At alanine 1 the chain carries N-acetylalanine. 19 beta stranded membrane-spanning segments follow: residues 25–34 (LVKLDVKTKS), 38–46 (VEFTTSGTS), 53–63 (VNGSLETKYKW), 68–75 (LTFTEKWN), 79–88 (TLGTEIAIED), 94–103 (LKLTFDTTFS), 110–119 (SGKVKAAYKQ), 122–129 (VNLGCDVD), 136–144 (AIHGSAVVG), 149–157 (LAGYQMTFD), 162–174 (KLTK…GYKT), 177–184 (FQLHTNVN), 188–197 (EFAGSIYQKV), 201–210 (METAVNLAWT), 217–226 (RFGIAAKYQL), 230–237 (AAISAKVN), 241–250 (LVGVGYTQTL), 253–262 (GVKLTLSALV), and 272–281 (HKLGLGLELE). Residues 241 to 243 (LVG) and 259 to 263 (SALVD) each bind NAD(+).

This sequence belongs to the eukaryotic mitochondrial porin family. Monomer, homodimer and higher order oligomers; formation of higher order structures is necessary for scramblase activity. Expressed in skeletal muscle and oocytes.

It localises to the mitochondrion outer membrane. It is found in the membrane. It catalyses the reaction chloride(in) = chloride(out). The catalysed reaction is K(+)(in) = K(+)(out). The enzyme catalyses a 1,2-diacyl-sn-glycero-3-phospho-L-serine(in) = a 1,2-diacyl-sn-glycero-3-phospho-L-serine(out). It carries out the reaction a 1,2-diacyl-sn-glycero-3-phosphocholine(in) = a 1,2-diacyl-sn-glycero-3-phosphocholine(out). It catalyses the reaction a 1,2-diacyl-sn-glycero-3-phospho-(1D-myo-inositol)(in) = a 1,2-diacyl-sn-glycero-3-phospho-(1D-myo-inositol)(out). Functionally, non-selective voltage-gated ion channel that mediates the transport of anions and cations through the mitochondrion outer membrane and plasma membrane. The channel adopts an open conformation at zero mV and a closed conformation at both positive and negative potentials. There are two populations of channels; the main that functions in a lower open-state conductance with lower ion selectivity, that switch, in a voltage-dependent manner, from the open to a low-conducting 'closed' state and the other that has a normal ion selectivity in the typical high conductance, 'open' state. In terms of biological role, catalyzes the scrambling of phospholipids across the outer mitochondrial membrane; the mechanism is unrelated to channel activity and is capable of translocating both anionic and zwitterionic phospholipids. This chain is Non-selective voltage-gated ion channel VDAC2, found in Xenopus laevis (African clawed frog).